The sequence spans 377 residues: Nitric oxide reductase FlRd-NAD(+) reductase (377 aa).

Belongs to the FAD-dependent oxidoreductase family. The cofactor is FAD.

The protein localises to the cytoplasm. It catalyses the reaction 2 reduced [nitric oxide reductase rubredoxin domain] + NAD(+) + H(+) = 2 oxidized [nitric oxide reductase rubredoxin domain] + NADH. It functions in the pathway nitrogen metabolism; nitric oxide reduction. Functionally, one of at least two accessory proteins for anaerobic nitric oxide (NO) reductase. Reduces the rubredoxin moiety of NO reductase. This is Nitric oxide reductase FlRd-NAD(+) reductase from Salmonella enteritidis PT4 (strain P125109).